The sequence spans 302 residues: uncharacterized protein (302 aa).

This is an uncharacterized protein from Haemophilus influenzae (strain ATCC 51907 / DSM 11121 / KW20 / Rd).